A 192-amino-acid chain; its full sequence is dTTP/UTP pyrophosphatase (192 aa).

Aspartate 65 acts as the Proton acceptor in catalysis.

It belongs to the Maf family. YhdE subfamily. It depends on a divalent metal cation as a cofactor.

Its subcellular location is the cytoplasm. The enzyme catalyses dTTP + H2O = dTMP + diphosphate + H(+). It catalyses the reaction UTP + H2O = UMP + diphosphate + H(+). Nucleoside triphosphate pyrophosphatase that hydrolyzes dTTP and UTP. May have a dual role in cell division arrest and in preventing the incorporation of modified nucleotides into cellular nucleic acids. This chain is dTTP/UTP pyrophosphatase, found in Fusobacterium nucleatum subsp. nucleatum (strain ATCC 25586 / DSM 15643 / BCRC 10681 / CIP 101130 / JCM 8532 / KCTC 2640 / LMG 13131 / VPI 4355).